Consider the following 1357-residue polypeptide: DNA-directed RNA polymerase subunit beta (1357 aa).

The protein belongs to the RNA polymerase beta chain family. The RNAP catalytic core consists of 2 alpha, 1 beta, 1 beta' and 1 omega subunit. When a sigma factor is associated with the core the holoenzyme is formed, which can initiate transcription.

The catalysed reaction is RNA(n) + a ribonucleoside 5'-triphosphate = RNA(n+1) + diphosphate. Functionally, DNA-dependent RNA polymerase catalyzes the transcription of DNA into RNA using the four ribonucleoside triphosphates as substrates. In Pseudomonas fluorescens (strain Pf0-1), this protein is DNA-directed RNA polymerase subunit beta.